Consider the following 329-residue polypeptide: MAP kinase-activated protein kinase 2 (329 aa).

ATP-binding positions include 1-7 (LGINGKV) and Lys22. The Protein kinase domain occupies 1–254 (LGINGKVLRI…ITEFMNHPWI (254 aa)). 68–70 (ECL) is a binding site for staurosporine. The Proton acceptor role is filled by Asp115. Thr151 carries the post-translational modification Phosphothreonine; by MAPK14. Ser201 carries the phosphoserine; by MAPK14 modification. Residue Ser257 is modified to Phosphoserine; by autocatalysis. The interval 257-293 (STKVPQTPLHTSRVLKEDKERWEDVKEEMTSALATMR) is autoinhibitory helix. At Thr263 the chain carries Phosphothreonine; by MAPK14. Lys282 is covalently cross-linked (Glycyl lysine isopeptide (Lys-Gly) (interchain with G-Cter in SUMO)). Residues 285–294 (MTSALATMRV) carry the Nuclear export signal (NES) motif. The interval 295 to 319 (DYEQIKIKKIEDASNPLLLKRRKKA) is p38 MAPK-binding site. 2 short sequence motifs (bipartite nuclear localization signal) span residues 300–303 (KIKK) and 314–318 (KRRKK).

Belongs to the protein kinase superfamily. CAMK Ser/Thr protein kinase family. In terms of assembly, heterodimer with p38-alpha/MAPK14; this heterodimer forms a stable complex: molecules are positioned 'face to face' so that the ATP-binding sites of both kinases are at the heterodimer interface. Interacts with PHC2. Interacts with HSF1. In terms of processing, sumoylation inhibits the protein kinase activity. Phosphorylated and activated by MAP kinase p38-alpha/MAPK14 at Thr-151, Ser-201 and Thr-263.

The protein resides in the cytoplasm. It localises to the nucleus. The catalysed reaction is L-seryl-[protein] + ATP = O-phospho-L-seryl-[protein] + ADP + H(+). The enzyme catalyses L-threonyl-[protein] + ATP = O-phospho-L-threonyl-[protein] + ADP + H(+). Activated following phosphorylation by p38-alpha/MAPK14 following various stresses. Inhibited following sumoylation. Specifically inhibited by pyrrolopyridine inhibitors. Functionally, stress-activated serine/threonine-protein kinase involved in cytokine production, endocytosis, reorganization of the cytoskeleton, cell migration, cell cycle control, chromatin remodeling, DNA damage response and transcriptional regulation. Following stress, it is phosphorylated and activated by MAP kinase p38-alpha/MAPK14, leading to phosphorylation of substrates. Phosphorylates serine in the peptide sequence, Hyd-X-R-X(2)-S, where Hyd is a large hydrophobic residue. Phosphorylates ALOX5, CDC25B, CDC25C, CEP131, ELAVL1, HNRNPA0, HSP27/HSPB1, KRT18, KRT20, LIMK1, LSP1, PABPC1, PARN, PDE4A, RCSD1, RPS6KA3, TAB3 and TTP/ZFP36. Phosphorylates HSF1; leading to the interaction with HSP90 proteins and inhibiting HSF1 homotrimerization, DNA-binding and transactivation activities. Mediates phosphorylation of HSP27/HSPB1 in response to stress, leading to the dissociation of HSP27/HSPB1 from large small heat-shock protein (sHsps) oligomers and impairment of their chaperone activities and ability to protect against oxidative stress effectively. Involved in inflammatory response by regulating tumor necrosis factor (TNF) and IL6 production post-transcriptionally: acts by phosphorylating AU-rich elements (AREs)-binding proteins ELAVL1, HNRNPA0, PABPC1 and TTP/ZFP36, leading to regulation of the stability and translation of TNF and IL6 mRNAs. Phosphorylation of TTP/ZFP36, a major post-transcriptional regulator of TNF, promotes its binding to 14-3-3 proteins and reduces its ARE mRNA affinity, leading to inhibition of dependent degradation of ARE-containing transcripts. Phosphorylates CEP131 in response to cellular stress following ultraviolet irradiation which promotes binding of CEP131 to 14-3-3 proteins and inhibits formation of novel centriolar satellites. Also involved in late G2/M checkpoint following DNA damage through a process of post-transcriptional mRNA stabilization: following DNA damage, relocalizes from nucleus to cytoplasm and phosphorylates HNRNPA0 and PARN, leading to stabilization of GADD45A mRNA. Involved in toll-like receptor signaling pathway (TLR) in dendritic cells: required for acute TLR-induced macropinocytosis by phosphorylating and activating RPS6KA3. The protein is MAP kinase-activated protein kinase 2 (MAPKAPK2) of Cricetulus longicaudatus (Long-tailed dwarf hamster).